Here is a 674-residue protein sequence, read N- to C-terminus: MRKILVTNALPYANGDLHLGHMLGYIQSDIWVRFQKLQGNQCIFVCGSDTHGTPIMLKAKSLGITPEELVTKYSNRHLQDFTDFEINFDNYHSTHNSLNKEIVEDIYNKLNNKNLISKKAIAQAYDPEAKMFLPDRFVKGTCPKCKAEDQYGDSCEVCGATYDPTELINPRSVISGQSPIQKNSEHFFFDLPALEKNIKDWIESNTLLQPEVANKLAEWFEQGLQSWDISRDAPYFGFAIPGTNEQKFFYVWLDAPMGYIASFKDYCNKNNINFGDFWGDSSSESELYHFIGKDIIYFHTLFWPAILSSTGYKTPTSVFANGFLTVNGKKMSKSRGTFIQARTYLDNLEPSYLRYYFASRLTSRIDDIDLNLEEFVTKSNSDIVGKVVNIASRCAGFIYKKFDATLSGEIFDPELESEFSKNHDAITQAFEKREFAHAVRLIMALADKANQFIDYHKPWQLAKEEGQEQKVHQVCSQGINMFKVLIVYLKPIIPSIVAEAERFLNIQFISWADAPKFLINHKIDKFKPLATRIEKEKVDKILEDTKKMLENEQSPQSKKEEPKLDIAAECTFDDFMKVDLRIAKITEASHVEGADKLLKLILDLGGVTKQVFAGIKSAYKPEDLIGKHTIMVANLAPRKMKFGMSEGMVLAAGDGKGIYILEPHEGAQPGMRVK.

The short motif at 11–21 is the 'HIGH' region element; sequence PYANGDLHLGH. Residues Cys-142, Cys-145, Cys-155, and Cys-158 each contribute to the Zn(2+) site. The 'KMSKS' region signature appears at 330–334; sequence KMSKS. Lys-333 provides a ligand contact to ATP. The region spanning 574 to 674 is the tRNA-binding domain; that stretch reads DFMKVDLRIA…EGAQPGMRVK (101 aa).

It belongs to the class-I aminoacyl-tRNA synthetase family. MetG type 1 subfamily. As to quaternary structure, homodimer. Zn(2+) is required as a cofactor.

Its subcellular location is the cytoplasm. It carries out the reaction tRNA(Met) + L-methionine + ATP = L-methionyl-tRNA(Met) + AMP + diphosphate. Its function is as follows. Is required not only for elongation of protein synthesis but also for the initiation of all mRNA translation through initiator tRNA(fMet) aminoacylation. The chain is Methionine--tRNA ligase from Francisella tularensis subsp. tularensis (strain FSC 198).